The chain runs to 653 residues: Dual specificity protein kinase shkB (653 aa).

The interval 112 to 133 (NPNNNNNNSNNTNSSDSNQNYS) is disordered. A Protein kinase domain is found at 174–432 (YNREAKLGSG…FAEISKQRIL (259 aa)). Residues 180–188 (LGSGAFGSV) and lysine 201 each bind ATP. Aspartate 298 functions as the Proton acceptor in the catalytic mechanism. Residues 534–625 (GFMAATSSKN…IKEPFEGGPF (92 aa)) form the SH2 domain.

It belongs to the protein kinase superfamily. TKL Ser/Thr protein kinase family. SH2 domain-containing protein kinase subfamily.

The protein localises to the membrane. It catalyses the reaction L-seryl-[protein] + ATP = O-phospho-L-seryl-[protein] + ADP + H(+). It carries out the reaction L-threonyl-[protein] + ATP = O-phospho-L-threonyl-[protein] + ADP + H(+). Its function is as follows. Required for proper chemotaxis and phagocytosis; proper spatiotemporal control of F-actin levels in chemotaxing cells. Negative regulator of the PI3K (phosphatidylinositol 3 kinase) pathway. Predominantly phosphorylates serines and threonines and tyrosines at a lower level. The polypeptide is Dual specificity protein kinase shkB (shkB) (Dictyostelium discoideum (Social amoeba)).